The primary structure comprises 240 residues: MLTRKQLDLLRFIQQRMRETGVPPSFDEMKDALDLKSKSGIHRLITALEERGFLRRLPNRARAIEVIRIPDAVVPPSGEVVRFTPSVVEGGRTAAPAAKAAPMPSSLGSDDNGRSISIPVMGRIAAGTPISAIQSQSRTVAMSPDFLAGGEHYALEVRGDSMIEAGILDGDLVVIRRQDTANTGDIVVALIDDEEATLKRLRRRGSSIALEAANPAYETRVLGPDRVRIQGRLVSLIRKY.

Positions 26 to 46 form a DNA-binding region, H-T-H motif; it reads FDEMKDALDLKSKSGIHRLIT. Catalysis depends on for autocatalytic cleavage activity residues Ser-161 and Lys-199.

This sequence belongs to the peptidase S24 family. In terms of assembly, homodimer.

The enzyme catalyses Hydrolysis of Ala-|-Gly bond in repressor LexA.. In terms of biological role, represses a number of genes involved in the response to DNA damage (SOS response), including recA and lexA. In the presence of single-stranded DNA, RecA interacts with LexA causing an autocatalytic cleavage which disrupts the DNA-binding part of LexA, leading to derepression of the SOS regulon and eventually DNA repair. The chain is LexA repressor from Methylobacterium nodulans (strain LMG 21967 / CNCM I-2342 / ORS 2060).